A 275-amino-acid chain; its full sequence is tRNA (guanine-N(1)-)-methyltransferase (275 aa).

S-adenosyl-L-methionine-binding positions include glycine 139 and 159-164 (IGDYIL).

This sequence belongs to the RNA methyltransferase TrmD family. Homodimer.

The protein localises to the cytoplasm. The enzyme catalyses guanosine(37) in tRNA + S-adenosyl-L-methionine = N(1)-methylguanosine(37) in tRNA + S-adenosyl-L-homocysteine + H(+). In terms of biological role, specifically methylates guanosine-37 in various tRNAs. This is tRNA (guanine-N(1)-)-methyltransferase from Lachnoclostridium phytofermentans (strain ATCC 700394 / DSM 18823 / ISDg) (Clostridium phytofermentans).